A 174-amino-acid polypeptide reads, in one-letter code: Transcriptional repressor NrdR (174 aa).

A zinc finger lies at 3–34 (CPFCQHSDTRVIDSRVSEDGTTIRRRRECEAC). The region spanning 49–139 (PTVVKSDGGR…VYRSFQDVAD (91 aa)) is the ATP-cone domain.

The protein belongs to the NrdR family. It depends on Zn(2+) as a cofactor.

Its function is as follows. Negatively regulates transcription of bacterial ribonucleotide reductase nrd genes and operons by binding to NrdR-boxes. This is Transcriptional repressor NrdR from Xanthomonas oryzae pv. oryzae (strain MAFF 311018).